A 316-amino-acid chain; its full sequence is Phosphate acyltransferase (316 aa).

It belongs to the PlsX family. In terms of assembly, homodimer. Probably interacts with PlsY.

It is found in the cytoplasm. The enzyme catalyses a fatty acyl-[ACP] + phosphate = an acyl phosphate + holo-[ACP]. It participates in lipid metabolism; phospholipid metabolism. In terms of biological role, catalyzes the reversible formation of acyl-phosphate (acyl-PO(4)) from acyl-[acyl-carrier-protein] (acyl-ACP). This enzyme utilizes acyl-ACP as fatty acyl donor, but not acyl-CoA. The protein is Phosphate acyltransferase of Chlamydia felis (strain Fe/C-56) (Chlamydophila felis).